Here is a 428-residue protein sequence, read N- to C-terminus: Tyrosine--tRNA ligase (428 aa).

Tyr41 is a binding site for L-tyrosine. The 'HIGH' region signature appears at 46–55; the sequence is PTADSLHLGH. L-tyrosine-binding residues include Tyr179 and Gln183. Positions 239–243 match the 'KMSKS' region motif; that stretch reads KFGKT. Position 242 (Lys242) interacts with ATP. One can recognise an S4 RNA-binding domain in the interval 361–418; the sequence is ADLMQALVDSELQPSRGQARKTIASNAITINGEKQSDPEYTFSDSDRLFGRYTLLRRG.

Belongs to the class-I aminoacyl-tRNA synthetase family. TyrS type 1 subfamily. Homodimer.

It localises to the cytoplasm. The catalysed reaction is tRNA(Tyr) + L-tyrosine + ATP = L-tyrosyl-tRNA(Tyr) + AMP + diphosphate + H(+). Functionally, catalyzes the attachment of tyrosine to tRNA(Tyr) in a two-step reaction: tyrosine is first activated by ATP to form Tyr-AMP and then transferred to the acceptor end of tRNA(Tyr). The sequence is that of Tyrosine--tRNA ligase from Cronobacter sakazakii (strain ATCC BAA-894) (Enterobacter sakazakii).